A 188-amino-acid chain; its full sequence is UPF0301 protein PsycPRwf_0144 (188 aa).

This sequence belongs to the UPF0301 (AlgH) family.

The chain is UPF0301 protein PsycPRwf_0144 from Psychrobacter sp. (strain PRwf-1).